The primary structure comprises 90 residues: Auxin-responsive protein SAUR23 (90 aa).

The protein belongs to the ARG7 family.

The protein resides in the cell membrane. In terms of biological role, functions as a positive effector of cell expansion through modulation of auxin transport. This Arabidopsis thaliana (Mouse-ear cress) protein is Auxin-responsive protein SAUR23.